The primary structure comprises 451 residues: Tubulin alpha-2 chain (451 aa).

Glutamine 11 lines the GTP pocket. Lysine 40 is modified (N6-acetyllysine). Glutamate 71, glycine 144, threonine 145, threonine 179, asparagine 206, and asparagine 228 together coordinate GTP. Glutamate 71 contacts Mg(2+). Residue glutamate 254 is part of the active site.

This sequence belongs to the tubulin family. Dimer of alpha and beta chains. A typical microtubule is a hollow water-filled tube with an outer diameter of 25 nm and an inner diameter of 15 nM. Alpha-beta heterodimers associate head-to-tail to form protofilaments running lengthwise along the microtubule wall with the beta-tubulin subunit facing the microtubule plus end conferring a structural polarity. Microtubules usually have 13 protofilaments but different protofilament numbers can be found in some organisms and specialized cells. Requires Mg(2+) as cofactor. In terms of processing, undergoes a tyrosination/detyrosination cycle, the cyclic removal and re-addition of a C-terminal tyrosine residue by the enzymes tubulin tyrosine carboxypeptidase (TTCP) and tubulin tyrosine ligase (TTL), respectively. Post-translationally, acetylation of alpha chains at Lys-40 stabilizes microtubules and affects affinity and processivity of microtubule motors. This modification has a role in multiple cellular functions, ranging from cell motility, cell cycle progression or cell differentiation to intracellular trafficking and signaling.

It is found in the cytoplasm. The protein localises to the cytoskeleton. The enzyme catalyses GTP + H2O = GDP + phosphate + H(+). Its function is as follows. Tubulin is the major constituent of microtubules, a cylinder consisting of laterally associated linear protofilaments composed of alpha- and beta-tubulin heterodimers. Microtubules grow by the addition of GTP-tubulin dimers to the microtubule end, where a stabilizing cap forms. Below the cap, tubulin dimers are in GDP-bound state, owing to GTPase activity of alpha-tubulin. This chain is Tubulin alpha-2 chain (TUBA), found in Oryza sativa subsp. japonica (Rice).